Here is a 231-residue protein sequence, read N- to C-terminus: NADH-ubiquinone oxidoreductase chain 4 (231 aa).

Helical transmembrane passes span 1–21, 34–54, 61–80, 84–106, 118–138, and 169–189; these read PIAG…YGII, VFLP…LTCL, SLIA…AIMI, WGLS…LFCL, ILIL…WWLL, and TIIL…HMFL.

The protein belongs to the complex I subunit 4 family.

The protein resides in the mitochondrion membrane. The enzyme catalyses a ubiquinone + NADH + 5 H(+)(in) = a ubiquinol + NAD(+) + 4 H(+)(out). Core subunit of the mitochondrial membrane respiratory chain NADH dehydrogenase (Complex I) that is believed to belong to the minimal assembly required for catalysis. Complex I functions in the transfer of electrons from NADH to the respiratory chain. The immediate electron acceptor for the enzyme is believed to be ubiquinone. This Porthidium nasutum (Hognosed pitviper) protein is NADH-ubiquinone oxidoreductase chain 4 (MT-ND4).